The following is a 141-amino-acid chain: Large ribosomal subunit protein uL11 (141 aa).

It belongs to the universal ribosomal protein uL11 family. In terms of assembly, part of the ribosomal stalk of the 50S ribosomal subunit. Interacts with L10 and the large rRNA to form the base of the stalk. L10 forms an elongated spine to which L12 dimers bind in a sequential fashion forming a multimeric L10(L12)X complex. One or more lysine residues are methylated.

In terms of biological role, forms part of the ribosomal stalk which helps the ribosome interact with GTP-bound translation factors. The sequence is that of Large ribosomal subunit protein uL11 from Streptococcus equi subsp. equi (strain 4047).